The following is a 176-amino-acid chain: Ribosome maturation factor RimM (176 aa).

The PRC barrel domain occupies 93-166 (EGEYYHADLI…RVVIEMPGEI (74 aa)).

It belongs to the RimM family. Binds ribosomal protein uS19.

Its subcellular location is the cytoplasm. An accessory protein needed during the final step in the assembly of 30S ribosomal subunit, possibly for assembly of the head region. Essential for efficient processing of 16S rRNA. May be needed both before and after RbfA during the maturation of 16S rRNA. It has affinity for free ribosomal 30S subunits but not for 70S ribosomes. This chain is Ribosome maturation factor RimM, found in Rhodopseudomonas palustris (strain BisA53).